Reading from the N-terminus, the 31-residue chain is Photosystem II reaction center protein T (31 aa).

The chain crosses the membrane as a helical span at residues 3-23; the sequence is ALVYVFLLVGTLMVIFFAIFF.

This sequence belongs to the PsbT family. PSII is composed of 1 copy each of membrane proteins PsbA, PsbB, PsbC, PsbD, PsbE, PsbF, PsbH, PsbI, PsbJ, PsbK, PsbL, PsbM, PsbT, PsbX, PsbY, PsbZ, Psb30/Ycf12, at least 3 peripheral proteins of the oxygen-evolving complex and a large number of cofactors. It forms dimeric complexes.

It localises to the plastid. Its subcellular location is the chloroplast thylakoid membrane. Found at the monomer-monomer interface of the photosystem II (PS II) dimer, plays a role in assembly and dimerization of PSII. PSII is a light-driven water plastoquinone oxidoreductase, using light energy to abstract electrons from H(2)O, generating a proton gradient subsequently used for ATP formation. The chain is Photosystem II reaction center protein T from Gracilaria tenuistipitata var. liui (Red alga).